Reading from the N-terminus, the 382-residue chain is Type II secretion system protein L (382 aa).

The Cytoplasmic segment spans residues 1-233; the sequence is MSGVSALFLP…QQSSQWRRWR (233 aa). The helical transmembrane segment at 234–254 threads the bilayer; that stretch reads PLLGLVGLWLVLQWGFTLVQA. Residues 255–382 lie on the Periplasmic side of the membrane; it reads WQLQREGDRY…TVSARLVIGG (128 aa).

The protein belongs to the GSP L family. As to quaternary structure, type II secretion system is composed of four main components: the outer membrane complex, the inner membrane complex, the cytoplasmic secretion ATPase and the periplasm-spanning pseudopilus. Forms homodimers. Interacts with XcpZ/GspM. Interacts with XcpR/GspE and XcpS/GspF.

It localises to the cell inner membrane. In terms of biological role, inner membrane component of the type II secretion system required for the energy-dependent secretion of extracellular factors such as proteases and toxins from the periplasm. Plays a role in the complex assembly and recruits XcpZ resulting in a stable complex in the inner membrane. Provides thus a link between the energy-providing XcpR protein in the cytoplasm and the rest of the T2SS machinery. In Pseudomonas aeruginosa (strain ATCC 15692 / DSM 22644 / CIP 104116 / JCM 14847 / LMG 12228 / 1C / PRS 101 / PAO1), this protein is Type II secretion system protein L (xcpY).